The sequence spans 342 residues: Anthranilate phosphoribosyltransferase (342 aa).

Residues G84, 87–88 (GD), T92, 94–97 (NITT), 112–120 (KHGNRSVSS), and S124 contribute to the 5-phospho-alpha-D-ribose 1-diphosphate site. G84 is a binding site for anthranilate. Position 96 (T96) interacts with Mg(2+). Residue N115 participates in anthranilate binding. Anthranilate is bound at residue R170. 2 residues coordinate Mg(2+): D228 and E229.

The protein belongs to the anthranilate phosphoribosyltransferase family. Homodimer. The cofactor is Mg(2+).

The enzyme catalyses N-(5-phospho-beta-D-ribosyl)anthranilate + diphosphate = 5-phospho-alpha-D-ribose 1-diphosphate + anthranilate. It functions in the pathway amino-acid biosynthesis; L-tryptophan biosynthesis; L-tryptophan from chorismate: step 2/5. Catalyzes the transfer of the phosphoribosyl group of 5-phosphorylribose-1-pyrophosphate (PRPP) to anthranilate to yield N-(5'-phosphoribosyl)-anthranilate (PRA). This Corynebacterium efficiens (strain DSM 44549 / YS-314 / AJ 12310 / JCM 11189 / NBRC 100395) protein is Anthranilate phosphoribosyltransferase.